Reading from the N-terminus, the 389-residue chain is 26S proteasome non-ATPase regulatory subunit 6 (389 aa).

In terms of domain architecture, PCI spans 193–361 (DFKQAAELFL…EIVETNRPDS (169 aa)).

It belongs to the proteasome subunit S10 family. As to quaternary structure, component of the 19S proteasome regulatory particle complex. The 26S proteasome consists of a 20S core particle (CP) and two 19S regulatory subunits (RP). The regulatory particle is made of a lid composed of 9 subunits including PSMD6, a base containing 6 ATPases and few additional components.

Its function is as follows. Component of the 26S proteasome, a multiprotein complex involved in the ATP-dependent degradation of ubiquitinated proteins. This complex plays a key role in the maintenance of protein homeostasis by removing misfolded or damaged proteins, which could impair cellular functions, and by removing proteins whose functions are no longer required. Therefore, the proteasome participates in numerous cellular processes, including cell cycle progression, apoptosis, or DNA damage repair. The sequence is that of 26S proteasome non-ATPase regulatory subunit 6 (Psmd6) from Mus musculus (Mouse).